Here is a 458-residue protein sequence, read N- to C-terminus: Tubulin beta chain (458 aa).

Residues Q11, E69, S138, G142, T143, G144, N204, and N226 each contribute to the GTP site. E69 lines the Mg(2+) pocket. The disordered stretch occupies residues 426–458 (EAATVEGEEEEDEYAEGGVVNGDQSYDEPYQAA). Residues 431–440 (EGEEEEDEYA) are compositionally biased toward acidic residues.

This sequence belongs to the tubulin family. In terms of assembly, dimer of alpha and beta chains. A typical microtubule is a hollow water-filled tube with an outer diameter of 25 nm and an inner diameter of 15 nM. Alpha-beta heterodimers associate head-to-tail to form protofilaments running lengthwise along the microtubule wall with the beta-tubulin subunit facing the microtubule plus end conferring a structural polarity. Microtubules usually have 13 protofilaments but different protofilament numbers can be found in some organisms and specialized cells. The cofactor is Mg(2+).

The protein localises to the cytoplasm. It localises to the cytoskeleton. Functionally, tubulin is the major constituent of microtubules, a cylinder consisting of laterally associated linear protofilaments composed of alpha- and beta-tubulin heterodimers. Microtubules grow by the addition of GTP-tubulin dimers to the microtubule end, where a stabilizing cap forms. Below the cap, tubulin dimers are in GDP-bound state, owing to GTPase activity of alpha-tubulin. The chain is Tubulin beta chain (TUBB1) from Pyropia yezoensis (Susabi-nori).